The sequence spans 794 residues: Protein IQ-DOMAIN 32 (794 aa).

The disordered stretch occupies residues cysteine 15–serine 101. Polar residues-rich tracts occupy residues alanine 23–lysine 33 and serine 56–serine 65. Phosphoserine is present on residues serine 78, serine 80, serine 142, serine 193, and serine 195. A compositionally biased stretch (polar residues) spans serine 80 to serine 95. IQ domains follow at residues aspartate 214–lysine 242 and leucine 243–alanine 265. The calmodulin-binding stretch occupies residues alanine 230–isoleucine 241. A disordered region spans residues histidine 277–alanine 296. Serine 369 carries the post-translational modification Phosphoserine. The disordered stretch occupies residues valine 375 to glutamate 417. Phosphoserine is present on serine 459. 2 disordered regions span residues glutamate 472–alanine 555 and alanine 578–arginine 794. Positions leucine 473–serine 486 are enriched in polar residues. Over residues serine 487 to isoleucine 500 the composition is skewed to basic and acidic residues. 2 positions are modified to phosphoserine: serine 502 and serine 544. Basic and acidic residues-rich tracts occupy residues threonine 539–alanine 555 and glutamate 585–proline 607. Low complexity predominate over residues serine 643–serine 654. The short motif at alanine 657–lysine 664 is the Nuclear localization signal element. The segment covering asparagine 768–glycine 786 has biased composition (polar residues).

It belongs to the IQD family. Binds to multiple calmodulin (CaM) in the presence of Ca(2+) and CaM-like proteins.

Its subcellular location is the nucleus. It is found in the cytoplasm. The protein localises to the cytoskeleton. Functionally, may be involved in cooperative interactions with calmodulins or calmodulin-like proteins. Recruits calmodulin proteins to microtubules, thus being a potential scaffold in cellular signaling and trafficking. May associate with nucleic acids and regulate gene expression at the transcriptional or post-transcriptional level. The chain is Protein IQ-DOMAIN 32 from Arabidopsis thaliana (Mouse-ear cress).